The sequence spans 1197 residues: Transient receptor potential cation channel subfamily A member 1 (1197 aa).

Topologically, residues 1-753 (MTSGDKETPK…KWNSYGKYFH (753 aa)) are cytoplasmic. ANK repeat units lie at residues 89-118 (KGRT…DFNA), 122-151 (AGNT…DTGV), 155-184 (KKQA…VIDI), 190-219 (HGRT…ACPR), 224-253 (NGYY…QRGC), 265-294 (EGNV…KIST), 298-327 (DLST…MEKR), 336-365 (QKMT…DINA), 369-398 (EHRS…CISV), 443-472 (MGCS…CINL), 476-505 (NNES…GSFI), 512-541 (AGMT…LLHR), 544-574 (TGRN…LLDQ), and 578-607 (DGNT…KLVY). The chain crosses the membrane as a helical span at residues 754–774 (LANLLIYSIFLVFVTIYSSLM). The Extracellular segment spans residues 775-827 (MNNIELKAGDNKTMSQYCNMGWEQLTMNLSQNPSVASQIRLDSCEERINRTTA). N-linked (GlcNAc...) asparagine glycans are attached at residues Asn785, Asn802, and Asn823. A helical membrane pass occupies residues 828 to 848 (ILFCAVVIVVYILLNSMRELI). Topologically, residues 849–856 (QIYQQKLH) are cytoplasmic. A helical membrane pass occupies residues 857 to 877 (YILETVNLISWVLYISALVMV). Over 878–889 (TPAFQPDGGINT) the chain is Extracellular. Residues 890–910 (IHYSAASIAVFLSWFRLLLFL) traverse the membrane as a helical segment. Residues 911-932 (QRFDQVGIYVVMFLEILQTLIK) lie on the Cytoplasmic side of the membrane. A helical transmembrane segment spans residues 933 to 953 (VLMVFSILIIAFGLAFYILLS). At 954-968 (KIIDPQPNHLSFSNI) the chain is on the extracellular side. Positions 969 to 989 (PMSLLRTFSMMLGELDFVGTY) form an intramembrane region, pore-forming. The Extracellular segment spans residues 990–1004 (VNTYYRDQLKVPMTS). Residues 1005–1025 (FLILSVFMILMPILLMNLLIG) traverse the membrane as a helical segment. Residues 1026–1197 (LAVGDIESVR…RAALSFNKSM (172 aa)) are Cytoplasmic-facing.

This sequence belongs to the transient receptor (TC 1.A.4) family. As to quaternary structure, homotetramer.

It is found in the cell membrane. In terms of biological role, essential for thermotaxis by sensing environmental temperature. Receptor-activated non-selective cation channel involved in detection of sensations such as temperature. Involved in heat nociception by being activated by warm temperature of about 24-29 degrees Celsius. The polypeptide is Transient receptor potential cation channel subfamily A member 1 (TrpA1) (Drosophila melanogaster (Fruit fly)).